We begin with the raw amino-acid sequence, 197 residues long: Holliday junction resolvase RecU (197 aa).

Residues 1-21 (MVNYPSGVRAGGYPQKKKNQN) are disordered. Mg(2+) is bound by residues T82, D84, D97, and Q116.

The protein belongs to the RecU family. The cofactor is Mg(2+).

It localises to the cytoplasm. The enzyme catalyses Endonucleolytic cleavage at a junction such as a reciprocal single-stranded crossover between two homologous DNA duplexes (Holliday junction).. Endonuclease that resolves Holliday junction intermediates in genetic recombination. Cleaves mobile four-strand junctions by introducing symmetrical nicks in paired strands. Promotes annealing of linear ssDNA with homologous dsDNA. Required for DNA repair, homologous recombination and chromosome segregation. This chain is Holliday junction resolvase RecU, found in Oenococcus oeni (strain ATCC BAA-331 / PSU-1).